The primary structure comprises 696 residues: Caprolactamase subunit alpha (696 aa).

Belongs to the HyuA family. The caprolactamase is a heterotetramer composed of two alpha subunits (CapA) and two beta subunits (CapB).

Its activity is regulated as follows. Activity is dependent on the presence of ATP and bicarbonate. The requirement for bicarbonate may be related to allosteric activation through conformational effects, but it is also conceivable that carboxyphosphate is formed and acts as a mediator in caprolactam activation, forming carboxy- or phospholactim. Component of a caprolactamase involved in the degradation of caprolactam, an industrial compound mainly used in the production of Nylon 6. Catalyzes the ATP-dependent hydrolysis of the caprolactam ring to form 6-aminocaproic acid (6-ACA). The alpha subunit is responsible for ATP-dependent substrate phosphorylation. The enzyme cannot use 5-oxoproline. This Pseudomonas jessenii protein is Caprolactamase subunit alpha.